A 307-amino-acid polypeptide reads, in one-letter code: Serine/threonine-protein phosphatase 4 catalytic subunit B (307 aa).

Mn(2+) is bound by residues Asp54, His56, Asp82, and Asn114. His115 serves as the catalytic Proton donor. Mn(2+) contacts are provided by His164 and His238. Leu307 is subject to Leucine methyl ester.

It belongs to the PPP phosphatase family. PP-4 (PP-X) subfamily. As to quaternary structure, serine/threonine-protein phosphatase 4 (PP4) occurs in different assemblies of the catalytic and one or more regulatory subunits. Requires Mn(2+) as cofactor.

The protein localises to the cytoplasm. It is found in the cytoskeleton. Its subcellular location is the microtubule organizing center. The protein resides in the centrosome. It carries out the reaction O-phospho-L-seryl-[protein] + H2O = L-seryl-[protein] + phosphate. The enzyme catalyses O-phospho-L-threonyl-[protein] + H2O = L-threonyl-[protein] + phosphate. Functionally, protein phosphatase that regulates many processes such as microtubule organization at centrosomes. The sequence is that of Serine/threonine-protein phosphatase 4 catalytic subunit B (ppp4cb) from Danio rerio (Zebrafish).